The sequence spans 284 residues: Probable endonuclease 4 (284 aa).

Zn(2+)-binding residues include H69, H113, E148, D182, H185, H217, D230, H232, and E262.

Belongs to the AP endonuclease 2 family. Zn(2+) serves as cofactor.

It catalyses the reaction Endonucleolytic cleavage to 5'-phosphooligonucleotide end-products.. In terms of biological role, endonuclease IV plays a role in DNA repair. It cleaves phosphodiester bonds at apurinic or apyrimidinic (AP) sites, generating a 3'-hydroxyl group and a 5'-terminal sugar phosphate. This is Probable endonuclease 4 from Bifidobacterium longum subsp. infantis (strain ATCC 15697 / DSM 20088 / JCM 1222 / NCTC 11817 / S12).